Consider the following 225-residue polypeptide: Glutathione s-transferase kappa 2 (225 aa).

Glutathione-binding positions include 15–17 (SPY), Asn52, and 200–201 (SD).

The protein belongs to the GST superfamily. Kappa family. In terms of tissue distribution, expressed in the pharynx, body wall muscles and epidermis. Weaker expression is seen in the intestine.

It localises to the mitochondrion. It carries out the reaction RX + glutathione = an S-substituted glutathione + a halide anion + H(+). Its function is as follows. Has roles in respiratory and lipid metabolism. This chain is Glutathione s-transferase kappa 2 (gstk-2), found in Caenorhabditis elegans.